The primary structure comprises 374 residues: MLKTYRGKVVVSLAGATVTCLGFLLFLSQHQRIQADGMQNESEVGLRSLQSLGDSETDDGAQPEQNAKKGFSAYFSKLTRSRREADKPSEAPGAATDAPPAEDISADDIFIAVKTTKKFHRSRLDLLLDTWISRNMRQTYIFTDGEDEELKKKIGSHAINTNCSAAHSRQALSCKMAVEYDKFIESGKKWFCHVDDDNYVNTKTLVKLLSNYPHTQDMYIGKPSLDRPIEATERLGDNKMRPVNFWFATGGAGFCISRGLALKMSPWASGGHFMNTAEKIRLPDDCTIGYIIESVLGVSLTRSSLFHSHLENLQQVSKSEVHKQITLSYGMFENKRNIINMKGAFSVEEDPSRFKSVHCLLYPDTPWCPPQVAY.

Topologically, residues Met1–Lys8 are cytoplasmic. The helical; Signal-anchor for type II membrane protein transmembrane segment at Val9–Gln29 threads the bilayer. Topologically, residues His30–Tyr374 are lumenal. Asn40 carries an N-linked (GlcNAc...) asparagine glycan. Residues Arg80–Pro100 form a disordered region. Position 123 (Arg123) interacts with substrate. Residue Asn162 is glycosylated (N-linked (GlcNAc...) asparagine). 2 disulfides stabilise this stretch: Cys163–Cys174 and Cys192–Cys255. Residue Asp196 coordinates substrate. Asp197 serves as a coordination point for Mn(2+). The active site involves Asp285. His309 lines the Mn(2+) pocket. Cys359 and Cys368 are disulfide-bonded.

Belongs to the glycosyltransferase 31 family. Mn(2+) is required as a cofactor. The cofactor is Co(2+). A soluble form may be derived from the membrane form by proteolytic processing. In terms of tissue distribution, in the embryo, expressed along the A-P axis of the neural tube, within the lateral plate mesoderm, in the presomitic mesoderm and the somites, in specific rhombomeres of the hindbrain (even-numbered rhombomeres) and in the otic vesicles.

The protein resides in the golgi apparatus membrane. The enzyme catalyses 3-O-(alpha-L-fucosyl)-L-threonyl-[EGF-like domain protein] + UDP-N-acetyl-alpha-D-glucosamine = 3-O-(N-acetyl-beta-D-glucosaminyl-(1-&gt;3)-alpha-L-fucosyl)-L-threonyl-[EGF-like domain protein] + UDP + H(+). It catalyses the reaction 3-O-(alpha-L-fucosyl)-L-seryl-[EGF-like domain protein] + UDP-N-acetyl-alpha-D-glucosamine = 3-O-(N-acetyl-beta-D-glucosaminyl-(1-&gt;3)-alpha-L-fucosyl)-L-seryl-[EGF-like domain protein] + UDP + H(+). Functionally, glycosyltransferase that initiates the elongation of O-linked fucose residues attached to EGF-like repeats in the extracellular domain of Notch molecules. Involved in the correct formation of boundaries in the somites and hindbrain. Required for Delta-Notch-mediated induction of hypochord cells at the lateral borders of the midline precursor domain. This is Beta-1,3-N-acetylglucosaminyltransferase lunatic fringe (lfng) from Danio rerio (Zebrafish).